The primary structure comprises 156 residues: MTTTTEFPSATAKARFVRVSPTKARRVIDLVRGKSVNDAIDILRWAPQAASEPVAKVIASAAANAQNNDGLDPSTLVVSEIFADEGPTAKRIRPRAQGRAFRIRKRTSHITVVVESRPKQEKGGKAGASKASSRAARAQGSKAAAAKKTESKGGTS.

A disordered region spans residues 114-156 (VESRPKQEKGGKAGASKASSRAARAQGSKAAAAKKTESKGGTS). Over residues 127 to 146 (GASKASSRAARAQGSKAAAA) the composition is skewed to low complexity. A compositionally biased stretch (basic and acidic residues) spans 147 to 156 (KKTESKGGTS).

This sequence belongs to the universal ribosomal protein uL22 family. In terms of assembly, part of the 50S ribosomal subunit.

Functionally, this protein binds specifically to 23S rRNA; its binding is stimulated by other ribosomal proteins, e.g. L4, L17, and L20. It is important during the early stages of 50S assembly. It makes multiple contacts with different domains of the 23S rRNA in the assembled 50S subunit and ribosome. In terms of biological role, the globular domain of the protein is located near the polypeptide exit tunnel on the outside of the subunit, while an extended beta-hairpin is found that lines the wall of the exit tunnel in the center of the 70S ribosome. This chain is Large ribosomal subunit protein uL22, found in Mycobacteroides abscessus (strain ATCC 19977 / DSM 44196 / CCUG 20993 / CIP 104536 / JCM 13569 / NCTC 13031 / TMC 1543 / L948) (Mycobacterium abscessus).